Reading from the N-terminus, the 476-residue chain is Ribulose bisphosphate carboxylase large chain (476 aa).

Positions 124 and 174 each coordinate substrate. The active-site Proton acceptor is lysine 176. Position 178 (lysine 178) interacts with substrate. Mg(2+)-binding residues include lysine 202, aspartate 204, and glutamate 205. Lysine 202 bears the N6-carboxylysine mark. Histidine 295 serves as the catalytic Proton acceptor. Residues arginine 296, histidine 328, and serine 380 each contribute to the substrate site.

It belongs to the RuBisCO large chain family. Type I subfamily. Heterohexadecamer of 8 large chains and 8 small chains; disulfide-linked. The disulfide link is formed within the large subunit homodimers. It depends on Mg(2+) as a cofactor. In terms of processing, the disulfide bond which can form in the large chain dimeric partners within the hexadecamer appears to be associated with oxidative stress and protein turnover.

Its subcellular location is the carboxysome. It carries out the reaction 2 (2R)-3-phosphoglycerate + 2 H(+) = D-ribulose 1,5-bisphosphate + CO2 + H2O. It catalyses the reaction D-ribulose 1,5-bisphosphate + O2 = 2-phosphoglycolate + (2R)-3-phosphoglycerate + 2 H(+). RuBisCO catalyzes two reactions: the carboxylation of D-ribulose 1,5-bisphosphate, the primary event in carbon dioxide fixation, as well as the oxidative fragmentation of the pentose substrate in the photorespiration process. Both reactions occur simultaneously and in competition at the same active site. This is Ribulose bisphosphate carboxylase large chain from Cyanothece sp. (strain PCC 7425 / ATCC 29141).